The primary structure comprises 249 residues: 2,3-bisphosphoglycerate-dependent phosphoglycerate mutase (249 aa).

Residues arginine 9–asparagine 16, threonine 22–glycine 23, arginine 61, glutamate 88–tyrosine 91, lysine 99, arginine 115–arginine 116, and glycine 184–asparagine 185 contribute to the substrate site. Histidine 10 serves as the catalytic Tele-phosphohistidine intermediate. Residue glutamate 88 is the Proton donor/acceptor of the active site.

Belongs to the phosphoglycerate mutase family. BPG-dependent PGAM subfamily. Homodimer.

The enzyme catalyses (2R)-2-phosphoglycerate = (2R)-3-phosphoglycerate. The protein operates within carbohydrate degradation; glycolysis; pyruvate from D-glyceraldehyde 3-phosphate: step 3/5. Its function is as follows. Catalyzes the interconversion of 2-phosphoglycerate and 3-phosphoglycerate. In Xylella fastidiosa (strain M23), this protein is 2,3-bisphosphoglycerate-dependent phosphoglycerate mutase.